Reading from the N-terminus, the 323-residue chain is Beta-ketoacyl-[acyl-carrier-protein] synthase III (323 aa).

Residues C114 and H250 contribute to the active site. Residues 251–255 (QANKR) form an ACP-binding region. The active site involves N280.

It belongs to the thiolase-like superfamily. FabH family. As to quaternary structure, homodimer.

It is found in the cytoplasm. It catalyses the reaction malonyl-[ACP] + acetyl-CoA + H(+) = 3-oxobutanoyl-[ACP] + CO2 + CoA. Its pathway is lipid metabolism; fatty acid biosynthesis. Catalyzes the condensation reaction of fatty acid synthesis by the addition to an acyl acceptor of two carbons from malonyl-ACP. Catalyzes the first condensation reaction which initiates fatty acid synthesis and may therefore play a role in governing the total rate of fatty acid production. Possesses both acetoacetyl-ACP synthase and acetyl transacylase activities. Its substrate specificity determines the biosynthesis of branched-chain and/or straight-chain of fatty acids. The polypeptide is Beta-ketoacyl-[acyl-carrier-protein] synthase III (Hyphomonas neptunium (strain ATCC 15444)).